Reading from the N-terminus, the 130-residue chain is Small ribosomal subunit protein uS8 (130 aa).

Belongs to the universal ribosomal protein uS8 family. In terms of assembly, part of the 30S ribosomal subunit. Contacts proteins S5 and S12.

Functionally, one of the primary rRNA binding proteins, it binds directly to 16S rRNA central domain where it helps coordinate assembly of the platform of the 30S subunit. The polypeptide is Small ribosomal subunit protein uS8 (Alcanivorax borkumensis (strain ATCC 700651 / DSM 11573 / NCIMB 13689 / SK2)).